Consider the following 385-residue polypeptide: Basigin (385 aa).

Positions 1 to 21 (MAAALFVLLGFALLGTHGASG) are cleaved as a signal peptide. In terms of domain architecture, Ig-like spans 37–120 (GGSVELHCEA…SNDPDRNHLT (84 aa)). Intrachain disulfides connect Cys-44–Cys-108, Cys-157–Cys-203, and Cys-242–Cys-301. The Ig-like C2-type domain occupies 138-219 (EPGTVFTTVE…MGTANIQLHG (82 aa)). Topologically, residues 138–323 (EPGTVFTTVE…ITLRVRSHLA (186 aa)) are extracellular. The N-linked (GlcNAc...) asparagine glycan is linked to Asn-160. Residues 195–199 (DDQWG) are essential for interaction with KDR/VEGFR2. Positions 221-315 (PRVKAVKSSE…SKGSDQAIIT (95 aa)) constitute an Ig-like V-type domain. N-linked (GlcNAc...) asparagine glycosylation is found at Asn-268 and Asn-302. Residues 324–344 (ALWPFLGIVAEVLVLVTIIFI) form a helical membrane-spanning segment. The Cytoplasmic portion of the chain corresponds to 345 to 385 (YEKRRKPEDVLDDDDAGSAPLKSSGQHQNDKGKNVRQRNSS). Residues 353–385 (DVLDDDDAGSAPLKSSGQHQNDKGKNVRQRNSS) form a disordered region. Ser-362 and Ser-368 each carry phosphoserine.

In terms of assembly, homooligomer. Interacts with NXNL1. Interacts with SLC2A1 and SLC16A1/GLUT1. Interacts with XKR8; promoting its localization at the cell membrane. (Microbial infection) Interacts with P.falciparum (isolate 3D7) RH5/PfRH5; the interaction is required for the invasion of the host erythrocytes by the parasite at the merozoite stage. As to quaternary structure, homooligomer. Forms heterooligomers with isoform 3. Interacts with VEGFA and KDR/VEGFR2. Interacts with PPIA/CYPA. Interacts with PPIL2; regulates BSG transport to the cell membrane. Interacts with SLC16A1; interaction mediates SLC16A3 targeting to the plasma membrane. Interacts with SLC16A12. Interacts with SLC16A11. Interacts with AJAP1. Interacts with SLC1A3, ATP1B2, MAG and L1CAM. Interacts with SLC16A3; interaction mediates SLC16A3 targeting to the plasma membrane. In terms of assembly, (Microbial infection) Interacts with P.falciparum (isolates 3D7 or 7G8) RH5/PfRH5; the interaction is required for the invasion of the host erythrocytes by the parasite at the merozoite stage. (Microbial infection) Does not interact with severe acute respiratory syndrome coronavirus 2 (SARS-CoV-2) spike glycoprotein, even if previous works were based on a putative interaction. As to quaternary structure, forms heterooligomers with isoform 2. In terms of assembly, interacts with SLC16A6; this interaction mediates targeting to the plasma membrane. Post-translationally, N-glycosylated. As to expression, retina-specific. Expressed in retinal cone photoreceptors (at protein level). Expressed in erythrocytes (at protein level). Highly expressed in melanoma cell lines (at protein level). Highly expressed in the heart, kidney, skeletal muscle and testis. In terms of tissue distribution, highly expressed in the bone marrow, fetal liver, lung, testis and thymus.

Its subcellular location is the melanosome. It is found in the cell membrane. The protein resides in the photoreceptor inner segment. It localises to the cell projection. The protein localises to the cilium. Its subcellular location is the photoreceptor outer segment. It is found in the endosome. The protein resides in the endoplasmic reticulum membrane. It localises to the basolateral cell membrane. Functionally, essential for normal retinal maturation and development. Acts as a retinal cell surface receptor for NXNL1 and plays an important role in NXNL1-mediated survival of retinal cone photoreceptors. In association with glucose transporter SLC16A1/GLUT1 and NXNL1, promotes retinal cone survival by enhancing aerobic glycolysis and accelerating the entry of glucose into photoreceptors. May act as a potent stimulator of IL6 secretion in multiple cell lines that include monocytes. (Microbial infection) Erythrocyte receptor for P.falciparum RH5 which is essential for erythrocyte invasion by the merozoite stage of P.falciparum isolates 3D7 and Dd2. Its function is as follows. Signaling receptor for cyclophilins, essential for PPIA/CYPA and PPIB/CYPB-dependent signaling related to chemotaxis and adhesion of immune cells. Plays an important role in targeting monocarboxylate transporters SLC16A1/GLUT1, SLC16A11 and SLC16A12 to the plasma membrane. Acts as a coreceptor for vascular endothelial growth factor receptor 2 (KDR/VEGFR2) in endothelial cells enhancing its VEGFA-mediated activation and downstream signaling. Promotes angiogenesis through EPAS1/HIF2A-mediated up-regulation of VEGFA (isoform VEGF-165 and VEGF-121) and KDR/VEGFR2 in endothelial cells. Plays a key role in regulating tumor growth, invasion, metastasis and neoangiogenesis by stimulating the production and release of extracellular matrix metalloproteinases and KDR/VEGFR2 by both tumor cells and stromal cells (fibroblasts and endothelial cells). In terms of biological role, (Microbial infection) Erythrocyte receptor for P.falciparum RH5 which is essential for erythrocyte invasion by the merozoite stage of P.falciparum isolates 3D7, Dd2, 7G8 and HB3. Binding of P.falciparum RH5 results in BSG dimerization which triggers an increase in intracellular Ca(2+) in the erythrocyte. This essential step leads to a rearrangement of the erythrocyte cytoskeleton required for the merozoite invasion. Functionally, (Microbial infection) Can facilitate human SARS coronavirus (SARS-CoV-1) infection via its interaction with virus-associated PPIA/CYPA. (Microbial infection) Can facilitate HIV-1 infection via its interaction with virus-associated PPIA/CYPA. Its function is as follows. (Microbial infection) First described as a receptor for severe acute respiratory syndrome coronavirus 2 (SARS-CoV-2), it is not required for SARS-CoV-2 infection. In terms of biological role, (Microbial infection) Acts as a receptor for measles virus. Functionally, (Microbial infection) Promotes entry of pentamer-expressing human cytomegalovirus (HCMV) into epithelial and endothelial cells. The protein is Basigin of Homo sapiens (Human).